The primary structure comprises 199 residues: Peroxiredoxin-1 (199 aa).

Residue S2 is modified to N-acetylserine. One can recognise a Thioredoxin domain in the interval 6 to 165 (AKIGHPAPNF…TLRLVQAFQF (160 aa)). At K7 the chain carries N6-acetyllysine; alternate. Residue K7 forms a Glycyl lysine isopeptide (Lys-Gly) (interchain with G-Cter in SUMO2); alternate linkage. N6-acetyllysine occurs at positions 16 and 27. Residue S32 is modified to Phosphoserine. K35 bears the N6-acetyllysine; alternate mark. K35 carries the post-translational modification N6-succinyllysine; alternate. C52 serves as the catalytic Cysteine sulfenic acid (-SOH) intermediate. At T90 the chain carries Phosphothreonine; by CDK1. A Glycyl lysine isopeptide (Lys-Gly) (interchain with G-Cter in SUMO2) cross-link involves residue K120. K136 is subject to N6-acetyllysine. Residues 176 to 199 (GWKPGSDTIKPDVQKSKEYFSKQK) are disordered. Residues 184-199 (IKPDVQKSKEYFSKQK) are compositionally biased toward basic and acidic residues. A Glycyl lysine isopeptide (Lys-Gly) (interchain with G-Cter in SUMO1) cross-link involves residue K185. K197 is modified (N6-acetyllysine).

Belongs to the peroxiredoxin family. AhpC/Prx1 subfamily. Homodimer; disulfide-linked, upon oxidation. 5 homodimers assemble to form a ring-like decamer. Interacts with GDPD5; forms a mixed-disulfide with GDPD5. Interacts with SESN1 and SESN2. Interacts with FAM107A. Post-translationally, phosphorylated on Thr-90 during the M-phase, which leads to a more than 80% decrease in enzymatic activity. In terms of processing, acetylation increases reducing activity and resistance to superoxidation. Deacetylated by HDAC6 which decreases reducing activity. The enzyme can be inactivated by further oxidation of the cysteine sulfenic acid (C(P)-SOH) to sulphinic acid (C(P)-SO2H) instead of its condensation to a disulfide bond. It can be reactivated by forming a transient disulfide bond with sulfiredoxin SRXN1, which reduces the cysteine sulfinic acid in an ATP- and Mg-dependent manner.

The protein localises to the cytoplasm. It localises to the melanosome. It catalyses the reaction a hydroperoxide + [thioredoxin]-dithiol = an alcohol + [thioredoxin]-disulfide + H2O. Thiol-specific peroxidase that catalyzes the reduction of hydrogen peroxide and organic hydroperoxides to water and alcohols, respectively. Plays a role in cell protection against oxidative stress by detoxifying peroxides and as sensor of hydrogen peroxide-mediated signaling events. Might participate in the signaling cascades of growth factors and tumor necrosis factor-alpha by regulating the intracellular concentrations of H(2)O(2). Reduces an intramolecular disulfide bond in GDPD5 that gates the ability to GDPD5 to drive postmitotic motor neuron differentiation. The chain is Peroxiredoxin-1 (PRDX1) from Homo sapiens (Human).